The primary structure comprises 301 residues: Nucleotide-binding protein Rfer_1653 (301 aa).

15-22 (GMSGSGKS) is a binding site for ATP. GTP is bound at residue 64–67 (DVRT).

It belongs to the RapZ-like family.

Functionally, displays ATPase and GTPase activities. The protein is Nucleotide-binding protein Rfer_1653 of Albidiferax ferrireducens (strain ATCC BAA-621 / DSM 15236 / T118) (Rhodoferax ferrireducens).